We begin with the raw amino-acid sequence, 105 residues long: Large ribosomal subunit protein eL36 (105 aa).

Belongs to the eukaryotic ribosomal protein eL36 family. As to quaternary structure, component of the large ribosomal subunit.

It localises to the cytoplasm. The protein resides in the cytosol. Its function is as follows. Component of the large ribosomal subunit. The ribosome is a large ribonucleoprotein complex responsible for the synthesis of proteins in the cell. This chain is Large ribosomal subunit protein eL36 (RPL36), found in Gallus gallus (Chicken).